The following is a 151-amino-acid chain: Viral interleukin-17 (151 aa).

The signal sequence occupies residues 1-22; that stretch reads MTFRKTSLVLLLLLSIDCIVKS. N-linked (GlcNAc...) asparagine; by host glycosylation is found at N36, N53, and N64. Disulfide bonds link C90-C140 and C95-C142.

It belongs to the IL-17 family.

Its subcellular location is the secreted. The polypeptide is Viral interleukin-17 (13) (Saimiri sciureus (Common squirrel monkey)).